The chain runs to 296 residues: Cytidine deaminase (296 aa).

2 CMP/dCMP-type deaminase domains span residues 47 to 167 (EESE…FGPS) and 186 to 296 (DSSD…IDPA). 88 to 90 (NLE) provides a ligand contact to substrate. Histidine 101 contacts Zn(2+). Residue glutamate 103 is the Proton donor of the active site. Zn(2+) is bound by residues cysteine 128 and cysteine 131.

This sequence belongs to the cytidine and deoxycytidylate deaminase family. In terms of assembly, homodimer. Requires Zn(2+) as cofactor.

It catalyses the reaction cytidine + H2O + H(+) = uridine + NH4(+). It carries out the reaction 2'-deoxycytidine + H2O + H(+) = 2'-deoxyuridine + NH4(+). This enzyme scavenges exogenous and endogenous cytidine and 2'-deoxycytidine for UMP synthesis. This Shewanella woodyi (strain ATCC 51908 / MS32) protein is Cytidine deaminase.